We begin with the raw amino-acid sequence, 256 residues long: MLIIDSGIGGLSILDNIKKKFPHINYIYMLDNEAFPYGKKKEKFLIERSIKIINAIKKIYPIKMVIIACNTASTISLPTLKKTFSIPIIGVLPVFKPAIKITKNKIIGLIATRSTINSLYIKKTIYKYSLENTIKIIATNELAVIAEKKVRKLSISNIKLKKIFQSWIILSIKPDTIILGCTHFSFLKKEIQQIFHKPINFIDPGDTIVNKIEKYFYQKKIKKNILLCSKYNKQIKQLVFFLKKYKFKKIQEINLN.

Residues 5–6 (DS) and 37–38 (YG) each bind substrate. The Proton donor/acceptor role is filled by C69. Position 70 to 71 (70 to 71 (NT)) interacts with substrate. The active-site Proton donor/acceptor is C181. 182–183 (TH) provides a ligand contact to substrate.

Belongs to the aspartate/glutamate racemases family.

It carries out the reaction L-glutamate = D-glutamate. The protein operates within cell wall biogenesis; peptidoglycan biosynthesis. In terms of biological role, provides the (R)-glutamate required for cell wall biosynthesis. The sequence is that of Glutamate racemase from Buchnera aphidicola subsp. Schizaphis graminum (strain Sg).